A 767-amino-acid chain; its full sequence is ATP-dependent rRNA helicase SPB4 (767 aa).

The Q motif signature appears at 28-56 (WTKLTPPLTPWVVSLLSDLGFGQMTPVQA). A Helicase ATP-binding domain is found at 59–291 (IPLFVSHKDV…RIGLRNPVRV (233 aa)). 72–79 (AVTGSGKT) lines the ATP pocket. The tract at residues 132–176 (HVQAQQQQDQDEQDEQDEQEAQSDSDTDPDASTALNNKRKSSNHL) is disordered. Over residues 140–160 (DQDEQDEQDEQEAQSDSDTDP) the composition is skewed to acidic residues. Positions 239 to 242 (DEAD) match the DEAD box motif. Residues 330-507 (QLARIVLFES…ILEPAEDDAS (178 aa)) form the Helicase C-terminal domain. Residues 609 to 767 (KLSGDQAKPP…NADAEPFFVI (159 aa)) are disordered. Basic and acidic residues-rich tracts occupy residues 636 to 645 (CDSHDSDDAH) and 659 to 681 (LERE…ANRE). The stretch at 654 to 746 (KNKRKLEREK…RANSDNDDAM (93 aa)) forms a coiled coil. Residues 690-700 (LKTQAAESSSN) are compositionally biased toward polar residues. Residues 701-746 (AKHEPPQDDHDEHDWNDDYRKLQKDKRQQRQRNKADRANSDNDDAM) show a composition bias toward basic and acidic residues. The span at 749–761 (NSDSDAAAANADA) shows a compositional bias: low complexity.

This sequence belongs to the DEAD box helicase family. DDX55/SPB4 subfamily. In terms of assembly, component of pre-60S ribosomal complexes.

Its subcellular location is the nucleus. It localises to the nucleolus. It carries out the reaction ATP + H2O = ADP + phosphate + H(+). In terms of biological role, ATP-binding RNA helicase involved in the biogenesis of 60S ribosomal subunits. Binds 90S pre-ribosomal particles and dissociates from pre-60S ribosomal particles after processing of 27SB pre-rRNA. Required for the normal formation of 18S rRNA through the processing of pre-rRNAs at sites A0, A1 and A2, and the normal formation of 25S and 5.8S rRNAs through the processing of pre-rRNAs at sites C1 and C2. This chain is ATP-dependent rRNA helicase SPB4, found in Mycosarcoma maydis (Corn smut fungus).